Reading from the N-terminus, the 1550-residue chain is DNA excision repair protein ERCC-6-like 2 (1550 aa).

Residues 1-23 (MDPSAPQPRAETSGKDIWHPGER) form a disordered region. The segment covering 12–22 (TSGKDIWHPGE) has biased composition (basic and acidic residues). The region spanning 135–321 (YGHYIHGGGC…WCVMDWAVPG (187 aa)) is the Helicase ATP-binding domain. 148–155 (DDMGLGKT) is a binding site for ATP. The DEAH box signature appears at 272–275 (DEAH). Residues 512-662 (VLQQLLNHCR…CVVVGSENAK (151 aa)) enclose the Helicase C-terminal domain. Residues 785–796 (PGQLTLLQCGFS) carry the Atypical PIP-box motif. 3 disordered regions span residues 808–848 (DSDG…TSKH), 914–1002 (FPDN…SSLR), and 1354–1410 (AETK…TRTG). Composition is skewed to basic and acidic residues over residues 830-840 (EAKDAGCEKNQ) and 933-953 (TEHT…DKRN). Residues S980 and S983 each carry the phosphoserine modification. Positions 992–1002 (SRVRKRASSLR) are enriched in basic residues. The segment covering 1359 to 1388 (SPVSSTQEIDSGKNSQASEDTVTSRSLNSE) has biased composition (polar residues). A phosphoserine mark is found at S1373 and S1376. Over residues 1389 to 1405 (SETRERRLENTMKDQQD) the composition is skewed to basic and acidic residues.

It belongs to the SNF2/RAD54 helicase family. As to quaternary structure, interacts with NEK6. Interacts (via an atypical PIP-box) with PCNA; this interaction facilitates cenrtomeric localization of ERCC6L2. Interacts with CYREN; this interaction is DNA independent. Interacts with XRCC6 and XRCC5. Post-translationally, phosphorylated by NEK6. In terms of tissue distribution, expressed in bone marrow (at protein level).

The protein resides in the nucleus. The protein localises to the cytoplasm. Its subcellular location is the cytoskeleton. It is found in the microtubule organizing center. It localises to the centrosome. The protein resides in the mitochondrion. The protein localises to the chromosome. Its subcellular location is the centromere. In terms of biological role, promotes double-strand break (DSB) end-joining and facilitates programmed recombination by controlling how DNA ends are joined in a spatially oriented manner during repair. Also plays a role in DNA repair by restricting DNA end resection in double strand break (DSB) repair. Facilitates replication of complex DNA regions and regulates the maintenance of chromatin structure. The sequence is that of DNA excision repair protein ERCC-6-like 2 from Homo sapiens (Human).